We begin with the raw amino-acid sequence, 193 residues long: MKSLIRPLVVLFVVLNAVTGLAYPAVMTVFGQAVFPSQANGSLIEQNGKVVGSALIGQPFDAPKYFWGRLSATAPMPYNAAGSGGSNLGPLNPSLADQVKARIAALRDAGTDLSKPVPVDLVTASASGLDPEITPAAAAYQVERVAKARNLTPDAVAQLVAANTTGRQFGVLGEPRVNVLKLNLALDAAQAAH.

A helical transmembrane segment spans residues 7-27; it reads PLVVLFVVLNAVTGLAYPAVM.

This sequence belongs to the KdpC family. As to quaternary structure, the system is composed of three essential subunits: KdpA, KdpB and KdpC.

It is found in the cell inner membrane. Part of the high-affinity ATP-driven potassium transport (or Kdp) system, which catalyzes the hydrolysis of ATP coupled with the electrogenic transport of potassium into the cytoplasm. This subunit acts as a catalytic chaperone that increases the ATP-binding affinity of the ATP-hydrolyzing subunit KdpB by the formation of a transient KdpB/KdpC/ATP ternary complex. The polypeptide is Potassium-transporting ATPase KdpC subunit (Burkholderia cenocepacia (strain HI2424)).